Reading from the N-terminus, the 171-residue chain is ATP synthase subunit b (171 aa).

Residues 2–22 (FLVKMVLGFLILLSPLCATGL) form a helical membrane-spanning segment.

Belongs to the ATPase B chain family. As to quaternary structure, F-type ATPases have 2 components, F(1) - the catalytic core - and F(0) - the membrane proton channel. F(1) has five subunits: alpha(3), beta(3), gamma(1), delta(1), epsilon(1). F(0) has three main subunits: a(1), b(2) and c(10-14). The alpha and beta chains form an alternating ring which encloses part of the gamma chain. F(1) is attached to F(0) by a central stalk formed by the gamma and epsilon chains, while a peripheral stalk is formed by the delta and b chains.

It is found in the cell inner membrane. Functionally, f(1)F(0) ATP synthase produces ATP from ADP in the presence of a proton or sodium gradient. F-type ATPases consist of two structural domains, F(1) containing the extramembraneous catalytic core and F(0) containing the membrane proton channel, linked together by a central stalk and a peripheral stalk. During catalysis, ATP synthesis in the catalytic domain of F(1) is coupled via a rotary mechanism of the central stalk subunits to proton translocation. Component of the F(0) channel, it forms part of the peripheral stalk, linking F(1) to F(0). The chain is ATP synthase subunit b from Helicobacter pylori (strain HPAG1).